The sequence spans 142 residues: Large ribosomal subunit protein bL17 (142 aa).

The protein belongs to the bacterial ribosomal protein bL17 family. As to quaternary structure, part of the 50S ribosomal subunit. Contacts protein L32.

The protein is Large ribosomal subunit protein bL17 of Brucella canis (strain ATCC 23365 / NCTC 10854 / RM-666).